A 78-amino-acid polypeptide reads, in one-letter code: DNA gyrase inhibitor YacG (78 aa).

4 residues coordinate Zn(2+): Cys-7, Cys-10, Cys-26, and Cys-30.

It belongs to the DNA gyrase inhibitor YacG family. As to quaternary structure, interacts with GyrB. Zn(2+) is required as a cofactor.

Inhibits all the catalytic activities of DNA gyrase by preventing its interaction with DNA. Acts by binding directly to the C-terminal domain of GyrB, which probably disrupts DNA binding by the gyrase. The sequence is that of DNA gyrase inhibitor YacG from Shewanella piezotolerans (strain WP3 / JCM 13877).